The primary structure comprises 741 residues: Double-stranded RNA-specific editase 1 (741 aa).

The disordered stretch occupies residues 1 to 79 (MDIEDEENMS…RRKTPGPVLP (79 aa)). At Ser26 the chain carries Phosphoserine. Positions 33 to 49 (PGPGEGSQLSNGGGGGP) are enriched in gly residues. The span at 63–73 (SKYRLKKRRKT) shows a compositional bias: basic residues. One can recognise a DRBM 1 domain in the interval 78 to 144 (LPKNALMQLN…AEKALRSFVQ (67 aa)). Interaction with substrate RNA stretches follow at residues 83–88 (LMQLNE) and 104–105 (VH). Ser149 is modified (phosphoserine). The region spanning 231 to 298 (PSGKNPVMIL…AQSALAAIFN (68 aa)) is the DRBM 2 domain. Interaction with substrate RNA stretches follow at residues 237–242 (VMILNE) and His259. The A to I editase domain maps to 370-737 (SVSTGTKCIN…VEKPTEQDQF (368 aa)). His394 is a binding site for Zn(2+). Glu396 functions as the Proton donor in the catalytic mechanism. Positions 400 and 401 each coordinate 1D-myo-inositol hexakisphosphate. Cys451 contacts Zn(2+). The interval 486–518 (RPPGLLSDPSTSTFQGAGTTEPADRHPNRKARG) is disordered. A compositionally biased stretch (polar residues) spans 493-503 (DPSTSTFQGAG). Cys556 lines the Zn(2+) pocket. 1D-myo-inositol hexakisphosphate contacts are provided by Lys559, Arg562, Lys669, Lys702, Lys712, and Lys730.

Homodimer. Homodimerization is essential for its catalytic activity. Can form heterodimers with isoform 5 of ADAR/ADAR1. The cofactor is 1D-myo-inositol hexakisphosphate. Highly expressed in brain and heart and at lower levels in placenta. Fair expression in lung, liver and kidney. Detected in brain, heart, kidney, lung and liver (at protein level). As to expression, highly expressed in hippocampus and colon. Expressed in pediatric astrocytomas and the protein has a decreased RNA-editing activity. The decrease in RNA editing correlates with the grade of malignancy of the tumors, with the high grade tumors showing lower editing is seen.

Its subcellular location is the nucleus. It is found in the nucleolus. It catalyses the reaction adenosine in double-stranded RNA + H2O + H(+) = inosine in double-stranded RNA + NH4(+). Its function is as follows. Catalyzes the hydrolytic deamination of adenosine to inosine in double-stranded RNA (dsRNA) referred to as A-to-I RNA editing. This may affect gene expression and function in a number of ways that include mRNA translation by changing codons and hence the amino acid sequence of proteins; pre-mRNA splicing by altering splice site recognition sequences; RNA stability by changing sequences involved in nuclease recognition; genetic stability in the case of RNA virus genomes by changing sequences during viral RNA replication; and RNA structure-dependent activities such as microRNA production or targeting or protein-RNA interactions. Can edit both viral and cellular RNAs and can edit RNAs at multiple sites (hyper-editing) or at specific sites (site-specific editing). Its cellular RNA substrates include: bladder cancer-associated protein (BLCAP), neurotransmitter receptors for glutamate (GRIA2 and GRIK2) and serotonin (HTR2C), GABA receptor (GABRA3) and potassium voltage-gated channel (KCNA1). Site-specific RNA editing of transcripts encoding these proteins results in amino acid substitutions which consequently alter their functional activities. Edits GRIA2 at both the Q/R and R/G sites efficiently but converts the adenosine in hotspot1 much less efficiently. Can exert a proviral effect towards human immunodeficiency virus type 1 (HIV-1) and enhances its replication via both an editing-dependent and editing-independent mechanism. The former involves editing of adenosines in the 5'UTR while the latter occurs via suppression of EIF2AK2/PKR activation and function. Can inhibit cell proliferation and migration and can stimulate exocytosis. Functionally, has a lower catalytic activity than isoform 2. In terms of biological role, has a higher catalytic activity than isoform 1. This is Double-stranded RNA-specific editase 1 from Homo sapiens (Human).